Consider the following 173-residue polypeptide: Large ribosomal subunit protein uL10 (173 aa).

It belongs to the universal ribosomal protein uL10 family. Part of the ribosomal stalk of the 50S ribosomal subunit. The N-terminus interacts with L11 and the large rRNA to form the base of the stalk. The C-terminus forms an elongated spine to which L12 dimers bind in a sequential fashion forming a multimeric L10(L12)X complex.

Forms part of the ribosomal stalk, playing a central role in the interaction of the ribosome with GTP-bound translation factors. In Thermus thermophilus (strain ATCC BAA-163 / DSM 7039 / HB27), this protein is Large ribosomal subunit protein uL10.